A 413-amino-acid polypeptide reads, in one-letter code: Probable N-acetyltransferase HLS1-like (413 aa).

The 183-residue stretch at 5 to 187 folds into the N-acetyltransferase domain; that stretch reads VEVREYDPSK…VNPVYAHRVN (183 aa).

The protein belongs to the acetyltransferase family.

The polypeptide is Probable N-acetyltransferase HLS1-like (Arabidopsis thaliana (Mouse-ear cress)).